We begin with the raw amino-acid sequence, 494 residues long: Subtilisin-like serine protease Pen ch 18.0101 (494 aa).

Positions 1–16 (MKGFLSLTLLPLLVAA) are cleaved as a signal peptide. The propeptide at 17-136 (SPVAVNSIHN…IEKDSEVRTM (120 aa)) is removed in mature form. Residues 43 to 136 (SYIVVFKKHV…IEKDSEVRTM (94 aa)) enclose the Inhibitor I9 domain. Residues 146-448 (PWGLARISHR…GGSANYTKIL (303 aa)) form the Peptidase S8 domain. IgE-binding stretches follow at residues 180-198 (VIDT…RANW) and 209-231 (EDGN…GVAK). Residues Asp182 and His214 each act as charge relay system in the active site. Residues Asn244 and Asn280 are each glycosylated (N-linked (GlcNAc...) asparagine). Ser376 functions as the Charge relay system in the catalytic mechanism. N-linked (GlcNAc...) asparagine glycosylation is present at Asn443. Positions 454 to 494 (KAHNAETTVEDRIGIIIDSAEKAFHKELGAIYSEIKDAVSV) are cleaved as a propeptide — removed in mature form.

Belongs to the peptidase S8 family.

Its function is as follows. Serine protease. The chain is Subtilisin-like serine protease Pen ch 18.0101 from Penicillium rubens.